The chain runs to 740 residues: Phosphoribosylformylglycinamidine synthase subunit PurL (740 aa).

Residue His53 is part of the active site. ATP contacts are provided by Tyr56 and Lys95. Position 97 (Glu97) interacts with Mg(2+). Substrate contacts are provided by residues Ser98–His101 and Arg120. His99 serves as the catalytic Proton acceptor. Residue Asp121 participates in Mg(2+) binding. A substrate-binding site is contributed by Gln244. A Mg(2+)-binding site is contributed by Asp272. Glu316–Gln318 is a substrate binding site. The ATP site is built by Asp497 and Gly534. Mg(2+) is bound at residue Asn535. A substrate-binding site is contributed by Ser537.

The protein belongs to the FGAMS family. In terms of assembly, monomer. Part of the FGAM synthase complex composed of 1 PurL, 1 PurQ and 2 PurS subunits.

It localises to the cytoplasm. It catalyses the reaction N(2)-formyl-N(1)-(5-phospho-beta-D-ribosyl)glycinamide + L-glutamine + ATP + H2O = 2-formamido-N(1)-(5-O-phospho-beta-D-ribosyl)acetamidine + L-glutamate + ADP + phosphate + H(+). Its pathway is purine metabolism; IMP biosynthesis via de novo pathway; 5-amino-1-(5-phospho-D-ribosyl)imidazole from N(2)-formyl-N(1)-(5-phospho-D-ribosyl)glycinamide: step 1/2. Functionally, part of the phosphoribosylformylglycinamidine synthase complex involved in the purines biosynthetic pathway. Catalyzes the ATP-dependent conversion of formylglycinamide ribonucleotide (FGAR) and glutamine to yield formylglycinamidine ribonucleotide (FGAM) and glutamate. The FGAM synthase complex is composed of three subunits. PurQ produces an ammonia molecule by converting glutamine to glutamate. PurL transfers the ammonia molecule to FGAR to form FGAM in an ATP-dependent manner. PurS interacts with PurQ and PurL and is thought to assist in the transfer of the ammonia molecule from PurQ to PurL. This Rhodospirillum rubrum (strain ATCC 11170 / ATH 1.1.1 / DSM 467 / LMG 4362 / NCIMB 8255 / S1) protein is Phosphoribosylformylglycinamidine synthase subunit PurL.